Here is a 100-residue protein sequence, read N- to C-terminus: Cysteine-rich venom protein VAR1 (100 aa).

Positions 1–22 (MILLKLYLTLAAILCQSRGTTS) are cleaved as a signal peptide. Residues 41–81 (NKHNDLRRTVDPPAKNMLKMSWDNIIAESAKRAALRCNQNE) enclose the SCP domain.

It belongs to the CRISP family. Contains 8 disulfide bonds. Expressed by the venom gland.

Its subcellular location is the secreted. Functionally, blocks ryanodine receptors, and potassium channels. This Varanus acanthurus (Ridge-tailed monitor) protein is Cysteine-rich venom protein VAR1.